The following is a 464-amino-acid chain: MLPVIALVGRPNVGKSTLFNQLTRSRDALVADFPGLTRDRQYGPGRVGGFPYMVVDTGGLSGEAETLDNLMARQTQQAIDESDVVLFLVDGREGLTAADQAIARSLRTQGKKVLLVVNKTDGVDADQAMAEFHALGFGAPIPIAATHGRGVLGLMNAVHALLPEVEEIQAEAERWPGIRIAFVGRPNAGKSTLINRILGEERVVATEIPGTTRDSIFIPFERDGQQYTLIDTAGVRRRSRVHEAIEKFSVVKTLQAIDAAHVVVMVLDAREGISEQDAHLLGVVLDAGRALVVAINKWDGLDPDQRDRIRHELDLKLPFLDFAEKRFISALHGTGVGDLFAHVKRAYDSAFIKVSTNHLTKLLESAMVAHQPPLVSGRRVKLRYAHQGGQNPPIIVIHGNMTERLPGSYKRYLSNHFRQHLKLVGTPIRLEFKTGENPYAGKRNVLTPRQQYKRKRMMRHAKKK.

EngA-type G domains lie at 3–166 and 178–351; these read PVIA…PEVE and IRIA…DSAF. GTP contacts are provided by residues 9-16, 56-60, 118-121, 184-191, 231-235, and 296-299; these read GRPNVGKS, DTGGL, NKTD, GRPNAGKS, DTAGV, and NKWD. The region spanning 352 to 436 is the KH-like domain; that stretch reads IKVSTNHLTK…PIRLEFKTGE (85 aa).

The protein belongs to the TRAFAC class TrmE-Era-EngA-EngB-Septin-like GTPase superfamily. EngA (Der) GTPase family. Associates with the 50S ribosomal subunit.

In terms of biological role, GTPase that plays an essential role in the late steps of ribosome biogenesis. This is GTPase Der from Thioalkalivibrio sulfidiphilus (strain HL-EbGR7).